A 138-amino-acid chain; its full sequence is Small ribosomal subunit protein uS12 (138 aa).

The residue at position 89 (Asp89) is a 3-methylthioaspartic acid. Positions 101-138 (ALDTAGTQNRNQGRSKYGTKRPKKGAATAAKGPVKGKK) are disordered. The segment covering 105–114 (AGTQNRNQGR) has biased composition (polar residues). Residues 125-138 (GAATAAKGPVKGKK) are compositionally biased toward low complexity.

It belongs to the universal ribosomal protein uS12 family. In terms of assembly, part of the 30S ribosomal subunit. Contacts proteins S8 and S17. May interact with IF1 in the 30S initiation complex.

Its function is as follows. With S4 and S5 plays an important role in translational accuracy. Functionally, interacts with and stabilizes bases of the 16S rRNA that are involved in tRNA selection in the A site and with the mRNA backbone. Located at the interface of the 30S and 50S subunits, it traverses the body of the 30S subunit contacting proteins on the other side and probably holding the rRNA structure together. The combined cluster of proteins S8, S12 and S17 appears to hold together the shoulder and platform of the 30S subunit. In Heliobacterium modesticaldum (strain ATCC 51547 / Ice1), this protein is Small ribosomal subunit protein uS12.